A 126-amino-acid chain; its full sequence is Large ribosomal subunit protein bL12 (126 aa).

Belongs to the bacterial ribosomal protein bL12 family. In terms of assembly, homodimer. Part of the ribosomal stalk of the 50S ribosomal subunit. Forms a multimeric L10(L12)X complex, where L10 forms an elongated spine to which 2 to 4 L12 dimers bind in a sequential fashion. Binds GTP-bound translation factors.

Functionally, forms part of the ribosomal stalk which helps the ribosome interact with GTP-bound translation factors. Is thus essential for accurate translation. This is Large ribosomal subunit protein bL12 from Bifidobacterium longum subsp. infantis (strain ATCC 15697 / DSM 20088 / JCM 1222 / NCTC 11817 / S12).